The chain runs to 808 residues: Sucrose synthase isoform 1 (808 aa).

Positions 277–754 are GT-B glycosyltransferase; sequence MVFNVVILSP…GLKRIQEKYT (478 aa).

The protein belongs to the glycosyltransferase 1 family. Plant sucrose synthase subfamily. In terms of assembly, homotetramer. As to expression, expressed in stems, in roots at different developmental stages, and in flower buds, flowers and maturing seeds, with the highest levels in strong utilization sinks for sucrose such as growing stems and tap root tips.

It carries out the reaction an NDP-alpha-D-glucose + D-fructose = a ribonucleoside 5'-diphosphate + sucrose + H(+). Its activity is regulated as follows. Fructose acts as a non-competitive inhibitor with an inhibition constant of 17.2 mM. In contrast, glucose inhibits uncompetitively with an inhibition constant of 4.3 mM. Functionally, sucrose-cleaving enzyme that provides UDP-glucose and fructose for various metabolic pathways. This chain is Sucrose synthase isoform 1, found in Daucus carota (Wild carrot).